The following is a 375-amino-acid chain: Mitochondrial phosphate carrier protein 3, mitochondrial (375 aa).

The chain crosses the membrane as a helical span at residues 76-96 (AFYAACTFGGILSCGLTHMTV). 3 Solcar repeats span residues 76–160 (AFYA…FKKT), 173–257 (YKTL…IVEM), and 274–353 (LQLG…FKVF). Topologically, residues 97–134 (TPLDLVKCNMQIDPAKYKSISSGFGILLKEQGVKGFFR) are mitochondrial matrix. Residues 135-154 (GWVPTLLGYSAQGACKFGFY) traverse the membrane as a helical segment. Residues 155–175 (EYFKKTYSDLAGPEYTAKYKT) lie on the Mitochondrial intermembrane side of the membrane. Residues 176–196 (LIYLAGSASAEIIADIALCPF) traverse the membrane as a helical segment. At 197-231 (EAVKVRVQTQPGFARGMSDGFPKFIKSEGYGGLYK) the chain is on the mitochondrial matrix side. The helical transmembrane segment at 232 to 251 (GLAPLWGRQIPYTMMKFASF) threads the bilayer. The Mitochondrial intermembrane segment spans residues 252-272 (ETIVEMIYKYAIPNPKSECSK). A helical transmembrane segment spans residues 273–293 (GLQLGVSFAGGYVAGVFCAIV). Residues 294-332 (SHPADNLVSFLNNAKGATVGDAVKKIGMVGLFTRGLPLR) are Mitochondrial matrix-facing. The helical transmembrane segment at 333-353 (IVMIGTLTGAQWGLYDAFKVF) threads the bilayer. Residues 354-375 (VGLPTTGGVAPAPAIAATEAKA) lie on the Mitochondrial intermembrane side of the membrane.

This sequence belongs to the mitochondrial carrier (TC 2.A.29) family. As to expression, expressed in stems, leaves and flowers. Strong expression in vascular tissues.

It is found in the mitochondrion inner membrane. Its function is as follows. Transport of phosphate groups from the cytosol to the mitochondrial matrix. Mediates salt stress tolerance through an ATP-dependent pathway and via modulation of the gibberellin metabolism. This chain is Mitochondrial phosphate carrier protein 3, mitochondrial (MPT3), found in Arabidopsis thaliana (Mouse-ear cress).